Consider the following 115-residue polypeptide: T cell receptor beta variable 18 (115 aa).

The N-terminal stretch at 1-21 is a signal peptide; that stretch reads MDTRLLCCAVICLLGAGLSNA. One can recognise an Ig-like domain in the interval 22 to 115; sequence GVMQNPRHLV…SAAYFCASSP (94 aa). A disulfide bridge connects residues Cys42 and Cys111.

As to quaternary structure, alpha-beta TR is a heterodimer composed of an alpha and beta chain; disulfide-linked. The alpha-beta TR is associated with the transmembrane signaling CD3 coreceptor proteins to form the TR-CD3 (TcR or TCR). The assembly of alpha-beta TR heterodimers with CD3 occurs in the endoplasmic reticulum where a single alpha-beta TR heterodimer associates with one CD3D-CD3E heterodimer, one CD3G-CD3E heterodimer and one CD247 homodimer forming a stable octameric structure. CD3D-CD3E and CD3G-CD3E heterodimers preferentially associate with TR alpha and TR beta chains, respectively. The association of the CD247 homodimer is the last step of TcR assembly in the endoplasmic reticulum and is required for transport to the cell surface.

It localises to the cell membrane. Functionally, v region of the variable domain of T cell receptor (TR) beta chain that participates in the antigen recognition. Alpha-beta T cell receptors are antigen specific receptors which are essential to the immune response and are present on the cell surface of T lymphocytes. Recognize peptide-major histocompatibility (MH) (pMH) complexes that are displayed by antigen presenting cells (APC), a prerequisite for efficient T cell adaptive immunity against pathogens. Binding of alpha-beta TR to pMH complex initiates TR-CD3 clustering on the cell surface and intracellular activation of LCK that phosphorylates the ITAM motifs of CD3G, CD3D, CD3E and CD247 enabling the recruitment of ZAP70. In turn ZAP70 phosphorylates LAT, which recruits numerous signaling molecules to form the LAT signalosome. The LAT signalosome propagates signal branching to three major signaling pathways, the calcium, the mitogen-activated protein kinase (MAPK) kinase and the nuclear factor NF-kappa-B (NF-kB) pathways, leading to the mobilization of transcription factors that are critical for gene expression and essential for T cell growth and differentiation. The T cell repertoire is generated in the thymus, by V-(D)-J rearrangement. This repertoire is then shaped by intrathymic selection events to generate a peripheral T cell pool of self-MH restricted, non-autoaggressive T cells. Post-thymic interaction of alpha-beta TR with the pMH complexes shapes TR structural and functional avidity. The polypeptide is T cell receptor beta variable 18 (Homo sapiens (Human)).